Here is a 226-residue protein sequence, read N- to C-terminus: Insulin-like growth factor-binding protein 6 (226 aa).

Residues 1–25 (MTWDGLPTQPLLMLLMLLFAAGSES) form the signal peptide. An IGFBP N-terminal domain is found at 26–99 (ALAGCPGCGP…LIGQGRCQRA (74 aa)). Disulfide bonds link cysteine 30/cysteine 33, cysteine 49/cysteine 55, cysteine 63/cysteine 76, and cysteine 70/cysteine 96. Residues 92–148 (GQGRCQRARGPSEETTKESKPHGGASRPRDRDRQKNPRTSAAPIRPSPVQDGEMGPC) are disordered. Basic and acidic residues predominate over residues 101–126 (GPSEETTKESKPHGGASRPRDRDRQK). The Thyroglobulin type-1 domain maps to 145–220 (MGPCRRHLDS…SPDGQGSSQC (76 aa)). 3 cysteine pairs are disulfide-bonded: cysteine 148-cysteine 176, cysteine 187-cysteine 198, and cysteine 200-cysteine 220. Positions 205-226 (GQPLPVSPDGQGSSQCSARSSG) are disordered. Residues 214 to 226 (GQGSSQCSARSSG) show a composition bias toward polar residues.

As to quaternary structure, interacts (via C-terminal domain) with PHB2. O-glycosylated.

The protein localises to the secreted. Its function is as follows. IGF-binding proteins prolong the half-life of the IGFs and have been shown to either inhibit or stimulate the growth promoting effects of the IGFs on cell culture. They alter the interaction of IGFs with their cell surface receptors. Activates the MAPK signaling pathway and induces cell migration. This chain is Insulin-like growth factor-binding protein 6 (Igfbp6), found in Rattus norvegicus (Rat).